Consider the following 130-residue polypeptide: Small ribosomal subunit protein uS11 (130 aa).

The protein belongs to the universal ribosomal protein uS11 family. In terms of assembly, part of the 30S ribosomal subunit. Interacts with proteins S7 and S18. Binds to IF-3.

Its function is as follows. Located on the platform of the 30S subunit, it bridges several disparate RNA helices of the 16S rRNA. Forms part of the Shine-Dalgarno cleft in the 70S ribosome. The polypeptide is Small ribosomal subunit protein uS11 (Synechococcus sp. (strain WH7803)).